The following is a 258-amino-acid chain: 5'-nucleotidase SurE (258 aa).

D9, D10, S42, and N96 together coordinate a divalent metal cation.

This sequence belongs to the SurE nucleotidase family. The cofactor is a divalent metal cation.

Its subcellular location is the cytoplasm. The enzyme catalyses a ribonucleoside 5'-phosphate + H2O = a ribonucleoside + phosphate. Functionally, nucleotidase that shows phosphatase activity on nucleoside 5'-monophosphates. This chain is 5'-nucleotidase SurE, found in Campylobacter jejuni subsp. jejuni serotype O:6 (strain 81116 / NCTC 11828).